A 352-amino-acid polypeptide reads, in one-letter code: MKKINKIVLAVGGTGGHIIPALAARETFIHEDIEVLLLGKGLAHFLGDDSEVAYCDIPSGSPFSLRVNRMFSGAKQLYKGYVAALQKIRDFTPDLAIGFGSYHSLPAMLASIRSRIPLFLHEQNIVPGKVNKLFSRFAKGVGMSFAAAGEHFHCRAEEVFLPIRKLSEQIVFPGASPVICVVGGSQGAKILNDVVPKALARIRESYSNLYVHHIVGPKGDLQAVSQVYQDAGINHTVTAFDHNMLGVLQASDLVISRSGATMLNELLWVQVPAILIPYPGAYGHQEVNAKFFTHTVGGGTMILQKYLTEESLSKQVLLALDPATSENRRKAMLSAQQKKSFKSLYQFICESL.

UDP-N-acetyl-alpha-D-glucosamine-binding positions include 14–16 (TGG), N124, R164, S185, and Q285.

Belongs to the glycosyltransferase 28 family. MurG subfamily.

The protein localises to the cell inner membrane. It catalyses the reaction di-trans,octa-cis-undecaprenyl diphospho-N-acetyl-alpha-D-muramoyl-L-alanyl-D-glutamyl-meso-2,6-diaminopimeloyl-D-alanyl-D-alanine + UDP-N-acetyl-alpha-D-glucosamine = di-trans,octa-cis-undecaprenyl diphospho-[N-acetyl-alpha-D-glucosaminyl-(1-&gt;4)]-N-acetyl-alpha-D-muramoyl-L-alanyl-D-glutamyl-meso-2,6-diaminopimeloyl-D-alanyl-D-alanine + UDP + H(+). It functions in the pathway cell wall biogenesis; peptidoglycan biosynthesis. Functionally, cell wall formation. Catalyzes the transfer of a GlcNAc subunit on undecaprenyl-pyrophosphoryl-MurNAc-pentapeptide (lipid intermediate I) to form undecaprenyl-pyrophosphoryl-MurNAc-(pentapeptide)GlcNAc (lipid intermediate II). In Chlamydia trachomatis serovar A (strain ATCC VR-571B / DSM 19440 / HAR-13), this protein is UDP-N-acetylglucosamine--N-acetylmuramyl-(pentapeptide) pyrophosphoryl-undecaprenol N-acetylglucosamine transferase.